A 133-amino-acid chain; its full sequence is Small ribosomal subunit protein uS8 (133 aa).

The protein belongs to the universal ribosomal protein uS8 family. In terms of assembly, part of the 30S ribosomal subunit.

One of the primary rRNA binding proteins, it binds directly to 16S rRNA central domain where it helps coordinate assembly of the platform of the 30S subunit. This is Small ribosomal subunit protein uS8 from Metallosphaera sedula (strain ATCC 51363 / DSM 5348 / JCM 9185 / NBRC 15509 / TH2).